The primary structure comprises 648 residues: Dystrotelin (648 aa).

The ZZ-type zinc-finger motif lies at 223 to 279; it reads QHRVHCHACKAFPITGLRYRCLKCLNVHLCQSCFLTERRSRKHKPSHSVLEYCTQPS. Positions 228, 231, 243, 246, 252, 255, 265, and 269 each coordinate Zn(2+). A coiled-coil region spans residues 367 to 446; sequence QRETAELQKD…LDTVRHLLSL (80 aa). The segment covering 455 to 474 has biased composition (polar residues); sequence SHSNLQLEQDGSINENNWTQ. 2 disordered regions span residues 455-509 and 536-557; these read SHSN…DTLY and QREEEELQEEEEGLHEKEEGLP. Positions 479–502 are enriched in basic and acidic residues; it reads KPHESSSTEHEVEERGTRQERRFE. Positions 538–548 are enriched in acidic residues; that stretch reads EEEELQEEEEG.

The protein resides in the cell membrane. In Danio rerio (Zebrafish), this protein is Dystrotelin (dytn).